A 757-amino-acid chain; its full sequence is Large ribosomal subunit protein mL102 (rPPR5) (757 aa).

The span at 39 to 55 (EETQTPANANPETQSPD) shows a compositional bias: polar residues. Residues 39–82 (EETQTPANANPETQSPDAKSETKKNLTSTETRPLRERFQRGKRQ) are disordered. The span at 70–82 (RPLRERFQRGKRQ) shows a compositional bias: basic and acidic residues. PPR repeat units lie at residues 149 to 183 (DRDT…GVPW), 184 to 218 (DEDM…GVER), 219 to 253 (TIKS…GVEP), 254 to 288 (TRHT…GISP), 289 to 323 (DDAT…KIGP), 324 to 358 (SVVS…GIEP), 359 to 393 (NATT…HIAP), 395 to 429 (DNSI…NVPA), 430 to 464 (EAGH…EIIL), 473 to 507 (EPSA…GVQD), 510 to 541 (ALNN…GVPR), 542 to 576 (ESNA…GHVP), 577 to 611 (DSSL…NVGI), 614 to 648 (NMDL…GHTA), 651 to 680 (DSLL…DLSL), and 681 to 715 (EFSS…GSST).

Belongs to the PPR family. P subfamily. As to quaternary structure, component of the mitochondrial ribosome large subunit.

It localises to the mitochondrion. In Arabidopsis thaliana (Mouse-ear cress), this protein is Large ribosomal subunit protein mL102 (rPPR5).